Reading from the N-terminus, the 287-residue chain is Flagellin (287 aa).

Belongs to the bacterial flagellin family.

The protein localises to the secreted. It localises to the bacterial flagellum. Functionally, flagellin is the subunit protein which polymerizes to form the filaments of bacterial flagella. In Listeria monocytogenes serovar 1/2a (strain ATCC BAA-679 / EGD-e), this protein is Flagellin (flaA).